The primary structure comprises 382 residues: Methenyltetrahydrofolate synthase domain-containing protein (382 aa).

The region spanning 306–382 is the RRM domain; it reads TTVYLSDIPP…QAKCVSSQKM (77 aa).

This chain is Methenyltetrahydrofolate synthase domain-containing protein (mthfsd), found in Danio rerio (Zebrafish).